Reading from the N-terminus, the 411-residue chain is LL-diaminopimelate aminotransferase (411 aa).

Y15 and G42 together coordinate substrate. Pyridoxal 5'-phosphate contacts are provided by residues Y72, 108–109 (SK), Y132, N187, Y218, and 246–248 (SFS). Positions 109, 132, and 187 each coordinate substrate. An N6-(pyridoxal phosphate)lysine modification is found at K249. Pyridoxal 5'-phosphate-binding residues include R257 and N292. The substrate site is built by N292 and R388.

This sequence belongs to the class-I pyridoxal-phosphate-dependent aminotransferase family. LL-diaminopimelate aminotransferase subfamily. In terms of assembly, homodimer. Requires pyridoxal 5'-phosphate as cofactor.

The catalysed reaction is (2S,6S)-2,6-diaminopimelate + 2-oxoglutarate = (S)-2,3,4,5-tetrahydrodipicolinate + L-glutamate + H2O + H(+). It participates in amino-acid biosynthesis; L-lysine biosynthesis via DAP pathway; LL-2,6-diaminopimelate from (S)-tetrahydrodipicolinate (aminotransferase route): step 1/1. Functionally, involved in the synthesis of meso-diaminopimelate (m-DAP or DL-DAP), required for both lysine and peptidoglycan biosynthesis. Catalyzes the direct conversion of tetrahydrodipicolinate to LL-diaminopimelate. In Trichodesmium erythraeum (strain IMS101), this protein is LL-diaminopimelate aminotransferase.